Here is a 562-residue protein sequence, read N- to C-terminus: Non-homologous end joining factor IFFO1 (562 aa).

Positions 65–116 (ALRNDLGSNINVLKTLNLRFRCFLAKVHELERRNRLLEKQLQQALEEGKQGR) are LMNA binding. Positions 73 to 529 (NINVLKTLNL…RLITQSGDRK (457 aa)) constitute an IF rod domain. Residues 85–117 (RCFLAKVHELERRNRLLEKQLQQALEEGKQGRR) adopt a coiled-coil conformation. A disordered region spans residues 154 to 187 (RVLGSPSRSPAGPLASSAACHTSSSTSTSTAFSS). Low complexity predominate over residues 168–187 (ASSAACHTSSSTSTSTAFSS). A coiled-coil region spans residues 237–301 (EIRALYNVLA…MKVEQLKAEL (65 aa)). The disordered stretch occupies residues 364-401 (MGGRKRERKAAVEEDTSLSESDGPRQPEGAEEESTALS). Residues 453 to 528 (EQEDSLEKVI…RRLITQSGDR (76 aa)) form an XCCR4 binding. Required for localization to the double-strand breaks (DSBs) region. Residues 458–504 (LEKVIKDTESLFKTREKEYQETIDQIELELATAKNDMNRHLHEYMEM) adopt a coiled-coil conformation. Residues 523-562 (TQSGDRKSPAFTAVPLSDPPPPPSETEDSDRDVSSDSSMR) are disordered. The span at 553–562 (RDVSSDSSMR) shows a compositional bias: basic and acidic residues.

Belongs to the intermediate filament family. In terms of assembly, forms a heterotetramer with XRCC4. The interaction with XRCC4 is direct, involves LIG4-free XRCC4 and leads to relocalization of IFFO1 at the double-strand break (DSB) sites. Interacts with LMNA; the interaction forms an interior nucleoskeleton and the recruitment to DNA double-strand breaks.

Its subcellular location is the nucleus. The protein resides in the nucleoplasm. It is found in the nucleus inner membrane. It localises to the nucleus matrix. Its function is as follows. Nuclear matrix protein involved in the immobilization of broken DNA ends and the suppression of chromosome translocation during DNA double-strand breaks (DSBs). Interacts with the nuclear lamina component LMNA, resulting in the formation of a nucleoskeleton that will relocalize to the DSB sites in a XRCC4-dependent manner and promote the immobilization of the broken ends, thereby preventing chromosome translocation. Acts as a scaffold that allows the DNA repair protein XRCC4 and LMNA to assemble into a complex at the DSB sites. The chain is Non-homologous end joining factor IFFO1 from Mus musculus (Mouse).